The sequence spans 94 residues: DNA-directed RNA polymerase subunit omega (94 aa).

The protein belongs to the RNA polymerase subunit omega family. In terms of assembly, the RNAP catalytic core consists of 2 alpha, 1 beta, 1 beta' and 1 omega subunit. When a sigma factor is associated with the core the holoenzyme is formed, which can initiate transcription.

It catalyses the reaction RNA(n) + a ribonucleoside 5'-triphosphate = RNA(n+1) + diphosphate. Functionally, promotes RNA polymerase assembly. Latches the N- and C-terminal regions of the beta' subunit thereby facilitating its interaction with the beta and alpha subunits. The protein is DNA-directed RNA polymerase subunit omega of Bifidobacterium animalis subsp. lactis (strain AD011).